The sequence spans 204 residues: Inactive ribonuclease-like protein 9 (204 aa).

An N-terminal signal peptide occupies residues 1-26 (MMRTPITTHPLLLLLLLQQLLQPVQF). Cystine bridges form between Cys-97-Cys-152, Cys-115-Cys-167, and Cys-122-Cys-129. N-linked (GlcNAc...) asparagine glycosylation is found at Asn-130 and Asn-142.

It belongs to the pancreatic ribonuclease family.

Its subcellular location is the secreted. Functionally, does not exhibit any ribonuclease activity. The chain is Inactive ribonuclease-like protein 9 (RNASE9) from Macaca nemestrina (Pig-tailed macaque).